The primary structure comprises 262 residues: tRNA pseudouridine synthase A (262 aa).

The active-site Nucleophile is the aspartate 54. Tyrosine 113 serves as a coordination point for substrate.

It belongs to the tRNA pseudouridine synthase TruA family. Homodimer.

The enzyme catalyses uridine(38/39/40) in tRNA = pseudouridine(38/39/40) in tRNA. Its function is as follows. Formation of pseudouridine at positions 38, 39 and 40 in the anticodon stem and loop of transfer RNAs. The protein is tRNA pseudouridine synthase A of Lactobacillus delbrueckii subsp. bulgaricus (strain ATCC BAA-365 / Lb-18).